Consider the following 153-residue polypeptide: Small ribosomal subunit protein uS5c (153 aa).

The region spanning 11-74 is the S5 DRBM domain; that stretch reads WQERVIQIRR…VDAKKQLINI (64 aa).

This sequence belongs to the universal ribosomal protein uS5 family. As to quaternary structure, part of the 30S ribosomal subunit. Contacts protein S4.

It is found in the plastid. The protein resides in the chloroplast. Its function is as follows. With S4 and S12 plays an important role in translational accuracy. The polypeptide is Small ribosomal subunit protein uS5c (rps5) (Cyanidioschyzon merolae (strain NIES-3377 / 10D) (Unicellular red alga)).